The chain runs to 1149 residues: Potassium channel subfamily U member 1 (1149 aa).

At 1 to 24 (MFQTKLRNESWEDLQKMSCTTEIQ) the chain is on the extracellular side. Residues 25-45 (VAFILSSFMTFISGLIILLIF) form a helical membrane-spanning segment. Residues 46–101 (RLIWRTVKKWQIIKGTGIILELFTSGSIRRNHVRSLHFHGRFRDRIEMLLSAQTFV) lie on the Cytoplasmic side of the membrane. A helical membrane pass occupies residues 102 to 122 (GQVLVILVFVLSIGSLIIYFI). Over 123–138 (NSADPVGSCSSYEDKT) the chain is Extracellular. Residues 139–159 (IPVDLVFNAFFSFYFGLRFMA) form a helical membrane-spanning segment. Residues 160–163 (ADDK) are Cytoplasmic-facing. Residues 164 to 184 (IKFWLEMNSIVDIFTIPPTFI) form a helical membrane-spanning segment. Topologically, residues 185 to 188 (SYYL) are extracellular. A helical; Voltage-sensor membrane pass occupies residues 189–209 (KSNWLGLRFLRALRLLELPRI). At 210–226 (LQILRAIKTSNSVKFSK) the chain is on the cytoplasmic side. The chain crosses the membrane as a helical span at residues 227–247 (LLSIVLSTWFTAAGFIHLVEN). The Extracellular portion of the chain corresponds to 248-259 (SGDPWLKGRNSQ). Positions 260–282 (NISYFDSVYLVMATTSTVGFGDV) form an intramembrane region, pore-forming. A Selectivity for potassium motif is present at residues 276–279 (TVGF). The Extracellular portion of the chain corresponds to 283-291 (VAKTSLGRT). A helical transmembrane segment spans residues 292 to 312 (FIIFFTLGSLILFANYIPEMV). At 313 to 1149 (ELFANKRKYT…EDPFAYSEPL (837 aa)) the chain is on the cytoplasmic side. RCK N-terminal domains are found at residues 331 to 473 (KKFI…DNII) and 713 to 884 (RNHI…EGSL). Over residues 829 to 845 (IDSSSDSSPSVSEETAS) the composition is skewed to low complexity. 2 disordered regions span residues 829 to 851 (IDSS…NGHN) and 1106 to 1149 (ARNQ…SEPL). Residues 1106–1120 (ARNQIRTNSSITSQK) are compositionally biased toward polar residues.

It belongs to the potassium channel family. Calcium-activated (TC 1.A.1.3) subfamily. KCa5.1/KCNU1 sub-subfamily. As to quaternary structure, homotetramer; which constitutes the calcium-activated potassium channel. Interacts with LRRC52; this interaction changes some channel gating properties, such as shifting gating to more negative potentials at a given pH. Testis-specific.

The protein localises to the cell membrane. Its subcellular location is the cell projection. It is found in the cilium. It localises to the flagellum membrane. It carries out the reaction K(+)(in) = K(+)(out). Its activity is regulated as follows. Regulated by changes in cytosolic pH; activated by alkalization. VU0546110 acts as a selective inhibitor. The auxiliary subunit LRRC52 shifts the activation of KCNU1 to more negative potentials at a given pH. Its function is as follows. Testis-specific potassium channel activated by both intracellular pH and membrane voltage that mediates export of K(+). Represents the primary spermatozoan K(+) current. The channel underlies a pH-triggered membrane hyperpolarization during the process of sperm capacitation, as sperm encounter the alkaline environment near the ovum in the female reproductive tract, thereby playing an essential for male fertility. The chain is Potassium channel subfamily U member 1 (KCNU1) from Macaca fascicularis (Crab-eating macaque).